A 215-amino-acid polypeptide reads, in one-letter code: Myelin protein zero-like protein 2 (215 aa).

An N-terminal signal peptide occupies residues 1–26 (MYGKSPALVLPLLLSLQLTALCPTEA). One can recognise an Ig-like V-type domain in the interval 27–141 (VEIYTSGALE…DGLVGTIRLS (115 aa)). Topologically, residues 27-154 (VEIYTSGALE…TVPFSEIYFL (128 aa)) are extracellular. N-linked (GlcNAc...) asparagine glycans are attached at residues N39 and N118. A disulfide bridge links C47 with C123. Residues 155–175 (AVAIGSACALMIIVVIVVVLF) form a helical membrane-spanning segment. Over 176-215 (QHFRKKRWADRADKAEGTKSKEEEKLNQGNKVSVFVEDTD) the chain is Cytoplasmic. A compositionally biased stretch (basic and acidic residues) spans 187 to 201 (ADKAEGTKSKEEEKL). The disordered stretch occupies residues 187–215 (ADKAEGTKSKEEEKLNQGNKVSVFVEDTD).

The protein belongs to the myelin P0 protein family. Widely expressed. Expressed in the cochlea, in Deiters' cells, possibly at contact sites with the basilar membrane. Expressed in both outer and inner auditory hair cells. In the stria vascularis, detected in the basal cell layer. Not detected in thymocytes, lymphocytes, macrophage or dendritic cells.

The protein resides in the membrane. Its function is as follows. Mediates homophilic cell-cell adhesion. This is Myelin protein zero-like protein 2 (Mpzl2) from Mus musculus (Mouse).